Consider the following 784-residue polypeptide: Toll-like receptor 2 (784 aa).

Residues 1–24 (MLRALWLFWILVAITVLFSKRCSA) form the signal peptide. Topologically, residues 25–587 (QESLSCDASG…ARPSVLECHQ (563 aa)) are extracellular. Cysteine 30 and cysteine 36 are joined by a disulfide. 19 LRR repeats span residues 54 to 77 (MKSL…ACAN), 78 to 101 (LQVL…SLGS), 102 to 125 (LEHL…PLSS), 126 to 150 (LKYL…NLTN), 151 to 175 (LQTL…GLTS), 176 to 199 (LNEL…SIRD), 200 to 223 (IHHL…ILSS), 224 to 250 (VRYL…VSSP), 251 to 278 (MKKL…YILE), 279 to 308 (LSEV…ELGK), 309 to 337 (VETV…LLEK), 338 to 361 (VKRI…HLKS), 362 to 388 (LEFL…AWPS), 389 to 414 (LQTL…TLKN), 415 to 437 (LTSL…WPEK), 438 to 457 (MRFL…CIPQ), 458 to 478 (TLEV…FLPR), 479 to 500 (LQEL…LFPV), and 501 to 524 (LLVM…SFPK). Asparagine 147 is a glycosylation site (N-linked (GlcNAc...) asparagine). Cysteine 353 and cysteine 382 are joined by a disulfide. Residue asparagine 414 is glycosylated (N-linked (GlcNAc...) asparagine). Cysteine 432 and cysteine 454 form a disulfide bridge. Asparagine 442 carries an N-linked (GlcNAc...) asparagine glycan. Residues 525-576 (LETLEAGDNHFVCSCELLSFTMETPALAQILVDWPDSYLCDSPPRLHGHRLQ) form the LRRCT domain. A helical membrane pass occupies residues 588 to 608 (AALVSGVCCALLLLILLVGAL). Topologically, residues 609-784 (CHHFHGLWYL…WVNLRTAIKS (176 aa)) are cytoplasmic. Positions 639-782 (VCYDAFVSYS…VFWVNLRTAI (144 aa)) constitute a TIR domain. Lysine 754 is covalently cross-linked (Glycyl lysine isopeptide (Lys-Gly) (interchain with G-Cter in ubiquitin)). Residues 761–778 (YLEWPLDEGQQEVFWVNL) carry the ATG16L1-binding motif motif.

Belongs to the Toll-like receptor family. As to quaternary structure, interacts with LY96, TLR1 and TLR6 (via extracellular domain). TLR2 seems to exist in heterodimers with either TLR1 or TLR6 before stimulation by the ligand. The heterodimers form bigger oligomers in response to their corresponding ligands as well as further heterotypic associations with other receptors such as CD14 and/or CD36. Binds MYD88 (via TIR domain). Interacts with TICAM1. Interacts with CNPY3. Interacts with ATG16L1. Interacts with non-modified M.tuberculosis protein MPT83. Interacts with PPP1R11. Interacts with TIRAP. In terms of assembly, (Microbial infection) Interacts with Staphylococcus aureus protein SSL3; this interaction inhibits TLR2-mediated cytokine production. (Microbial infection) Interacts with Toxoplasma gondii micronemal protein 1 (MIC1); the interaction promotes activation of bone marrow-derived dendritic cells and macrophages. Interacts with Toxoplasma gondii micronemal protein 4 (MIC4); the interaction promotes activation of bone marrow-derived dendritic cells and macrophages. Post-translationally, ubiquitinated at Lys-754 by PPP1R11, leading to its degradation. Deubiquitinated by USP2. Glycosylation of Asn-442 is critical for secretion of the N-terminal ectodomain of TLR2. As to expression, detected in a macrophage cell line, smooth muscle, lung, spleen, thymus, brain and adipose tissue. Cell surface expression detected in lung alveolar macrophages, dendritic macrophages and at lower levels in lung macrophages (at protein level).

It localises to the cell membrane. The protein resides in the cytoplasmic vesicle. It is found in the phagosome membrane. The protein localises to the membrane raft. Functionally, cooperates with LY96 to mediate the innate immune response to bacterial lipoproteins and other microbial cell wall components. Cooperates with TLR1 or TLR6 to mediate the innate immune response to bacterial lipoproteins or lipopeptides. Acts via MYD88 and TRAF6, leading to NF-kappa-B activation, cytokine secretion and the inflammatory response. May also promote apoptosis in response to lipoproteins. Forms activation clusters composed of several receptors depending on the ligand, these clusters trigger signaling from the cell surface and subsequently are targeted to the Golgi in a lipid-raft dependent pathway. Forms the cluster TLR2:TLR6:CD14:CD36 in response to diacylated lipopeptides and TLR2:TLR1:CD14 in response to triacylated lipopeptides. Recognizes M.tuberculosis major T-antigen EsxA (ESAT-6) which inhibits downstream MYD88-dependent signaling. Acts as the major receptor for M.tuberculosis lipoproteins LprA, LprG, LpqH and PhoS1 (pstS1), in conjunction with TLR1 and for some but not all lipoproteins CD14 and/or CD36. The lipoproteins act as agonists to modulate antigen presenting cell functions in response to the pathogen. Recombinant MPT83 from M.tuberculosis stimulates secretion of cytokines (TNF-alpha, IL-6 and IL-12p40) by mouse macrophage cell lines in a TLR2-dependent fashion, which leads to increased host innate immunity responses against the bacterium. Lung macrophages which express low levels of TLR2 respond poorly to stimulation by M.tuberculosis LpqH. Required for normal uptake of M.tuberculosis, a process that is inhibited by M.tuberculosis LppM. Interacts with TICAM2. Its function is as follows. (Microbial infection) Mediates activation of bone marrow-derived dendritic cells and macrophages, and production of pro-inflammatory cytokines, such as IL12 (IL12B/IL12A), triggered by Toxoplasma gondii micronemal protein 4 (MIC4) and micronemal protein 1 (MIC1). The protein is Toll-like receptor 2 (Tlr2) of Mus musculus (Mouse).